The chain runs to 142 residues: Natriuretic peptides A (142 aa).

An N-terminal signal peptide occupies residues 1–23 (MMLKTVIYTGVLFLICNKVLVRA). Residues 24 to 112 (DPLYSPYSSK…RLRDLLMAPR (89 aa)) constitute a propeptide that is removed on maturation. Positions 47 to 123 (DTLGQDEGND…NRGSSGCFGS (77 aa)) are disordered. Residues 77 to 94 (WDRERERQWPASDYKKPQ) are compositionally biased toward basic and acidic residues. Residues Cys-120 and Cys-136 are joined by a disulfide bond.

This sequence belongs to the natriuretic peptide family. Cleaved upon secretion to produce the functional hormone. As to expression, expressed in heart atrium and to a lower extent in heart ventricle, but not in brain.

Its subcellular location is the secreted. Hormone playing a key role in cardiovascular homeostasis through regulation of natriuresis, diuresis, and vasodilation. Has a cGMP-stimulating activity. This is Natriuretic peptides A (nppa) from Acipenser transmontanus (White sturgeon).